A 124-amino-acid polypeptide reads, in one-letter code: Histone H2B, embryonic (124 aa).

The disordered stretch occupies residues 1-31 (MAPTAQVAKKGSKKAVKGTKTAXGGKKRNRK). Serine 111 carries an O-linked (GlcNAc) serine glycan. Lysine 119 participates in a covalent cross-link: Glycyl lysine isopeptide (Lys-Gly) (interchain with G-Cter in ubiquitin).

The protein belongs to the histone H2B family. In terms of assembly, the nucleosome is a histone octamer containing two molecules each of H2A, H2B, H3 and H4 assembled in one H3-H4 heterotetramer and two H2A-H2B heterodimers. The octamer wraps approximately 147 bp of DNA. In terms of processing, monoubiquitination of Lys-119 gives a specific tag for epigenetic transcriptional activation and is also prerequisite for histone H3 'Lys-4' and 'Lys-79' methylation. GlcNAcylation at Ser-111 promotes monoubiquitination of Lys-119. It fluctuates in response to extracellular glucose, and associates with transcribed genes.

It is found in the nucleus. The protein resides in the chromosome. In terms of biological role, core component of nucleosome. Nucleosomes wrap and compact DNA into chromatin, limiting DNA accessibility to the cellular machineries which require DNA as a template. Histones thereby play a central role in transcription regulation, DNA repair, DNA replication and chromosomal stability. DNA accessibility is regulated via a complex set of post-translational modifications of histones, also called histone code, and nucleosome remodeling. The protein is Histone H2B, embryonic of Strongylocentrotus purpuratus (Purple sea urchin).